The sequence spans 90 residues: UPF0297 protein Swol_0469 (90 aa).

It belongs to the UPF0297 family.

In Syntrophomonas wolfei subsp. wolfei (strain DSM 2245B / Goettingen), this protein is UPF0297 protein Swol_0469.